The primary structure comprises 369 residues: MTLWFVFALMTVAAIFAVLWPLGRSARAQNQGSEVVVYKDQLTEIERDLASGLIAAPEAEAARVEISRRLLAAAGSEPVSEPKSSLKWRRAAAVLALVGLPLVAIGVYMPLGSPRLQDFPLAQRERGSGSGMAGSLENLVVQVEQHLEKNPTDGRGWNVLAPVLERLGRFDDAVRAYRNSITYNGESPERRSDLGEAISAAAGGVVTAEAKTEFERAHALNADDPKANYFLGLAAEQDGRKDDAATIWRALLAKAPADAPWRPLVQSSLVRVGGGTMPALSDETIAASKDMSEGDRGAMVRGMVERLATRLKQNSDDVEGWLRLVRAYLVMGDRDKAVGASSDARQAVAKDTERLRQLNEGLKTLGLDG.

2 helical membrane-spanning segments follow: residues 7–23 (FALMTVAAIFAVLWPLG) and 91–111 (AAAVLALVGLPLVAIGVYMPL). Over 112 to 369 (GSPRLQDFPL…EGLKTLGLDG (258 aa)) the chain is Periplasmic.

It localises to the cell inner membrane. Functionally, required for the biogenesis of c-type cytochromes. Possible subunit of a heme lyase. This chain is Cytochrome c-type biogenesis protein CycH (cycH), found in Bradyrhizobium diazoefficiens (strain JCM 10833 / BCRC 13528 / IAM 13628 / NBRC 14792 / USDA 110).